The chain runs to 372 residues: Maltose/maltodextrin import ATP-binding protein MalK (372 aa).

An ABC transporter domain is found at 4–234 (VSLRNVGKSY…PANRFVAGFI (231 aa)). Position 36-43 (36-43 (GPSGCGKS)) interacts with ATP.

This sequence belongs to the ABC transporter superfamily. Maltooligosaccharide importer (TC 3.A.1.1.1) family. The complex is composed of two ATP-binding proteins (MalK), two transmembrane proteins (MalG and MalK) and a solute-binding protein (MalE).

The protein resides in the cell inner membrane. It carries out the reaction D-maltose(out) + ATP + H2O = D-maltose(in) + ADP + phosphate + H(+). Its function is as follows. Part of the ABC transporter complex MalEFGK involved in maltose/maltodextrin import. Responsible for energy coupling to the transport system. The chain is Maltose/maltodextrin import ATP-binding protein MalK from Mannheimia succiniciproducens (strain KCTC 0769BP / MBEL55E).